A 504-amino-acid chain; its full sequence is uncharacterized protein (504 aa).

A helical transmembrane segment spans residues 6–26 (NLFIIFIFLFLLSQVSAYITF).

The protein to M.jannaschii MJ1506 and MJ1561.

The protein resides in the membrane. This is an uncharacterized protein from Methanocaldococcus jannaschii (strain ATCC 43067 / DSM 2661 / JAL-1 / JCM 10045 / NBRC 100440) (Methanococcus jannaschii).